The chain runs to 348 residues: Dihydroorotase (348 aa).

Residues His14 and His16 each contribute to the Zn(2+) site. Residues 16-18 (HLR) and Asn42 each bind substrate. Residues Lys100, His137, and His175 each contribute to the Zn(2+) site. Residue Lys100 is modified to N6-carboxylysine. His137 serves as a coordination point for substrate. Leu220 provides a ligand contact to substrate. Residue Asp248 participates in Zn(2+) binding. Residue Asp248 is part of the active site. Positions 252 and 264 each coordinate substrate.

It belongs to the metallo-dependent hydrolases superfamily. DHOase family. Class II DHOase subfamily. In terms of assembly, homodimer. Requires Zn(2+) as cofactor.

The catalysed reaction is (S)-dihydroorotate + H2O = N-carbamoyl-L-aspartate + H(+). It participates in pyrimidine metabolism; UMP biosynthesis via de novo pathway; (S)-dihydroorotate from bicarbonate: step 3/3. Its function is as follows. Catalyzes the reversible cyclization of carbamoyl aspartate to dihydroorotate. This chain is Dihydroorotase, found in Pseudomonas putida (strain ATCC 47054 / DSM 6125 / CFBP 8728 / NCIMB 11950 / KT2440).